A 326-amino-acid chain; its full sequence is 5,10-methylenetetrahydromethanopterin reductase (326 aa).

It belongs to the mer family.

The protein localises to the cytoplasm. It carries out the reaction 5-methyl-5,6,7,8-tetrahydromethanopterin + oxidized coenzyme F420-(gamma-L-Glu)(n) + H(+) = 5,10-methylenetetrahydromethanopterin + reduced coenzyme F420-(gamma-L-Glu)(n). It participates in one-carbon metabolism; methanogenesis from CO(2); methyl-coenzyme M from 5,10-methylene-5,6,7,8-tetrahydromethanopterin: step 1/2. Catalyzes the reversible reduction of methylene-H(4)MPT to methyl-H(4)MPT. This Methanolobus tindarius protein is 5,10-methylenetetrahydromethanopterin reductase.